The primary structure comprises 410 residues: Class E basic helix-loop-helix protein 41 (410 aa).

A Glycyl lysine isopeptide (Lys-Gly) (interchain with G-Cter in SUMO2) cross-link involves residue Lys-31. One can recognise a bHLH domain in the interval Thr-44–Leu-99. Lys-121 participates in a covalent cross-link: Glycyl lysine isopeptide (Lys-Gly) (interchain with G-Cter in SUMO2). An Orange domain is found at Phe-131–Leu-166. Disordered stretches follow at residues Ile-209–Lys-255 and Gly-360–Pro-410. Lys-240 is covalently cross-linked (Glycyl lysine isopeptide (Lys-Gly) (interchain with G-Cter in SUMO2)).

In terms of assembly, homodimer. Heterodimer with BHLHE40/DEC1. Interacts with CIART. Interacts with BMAL1. Interacts with RXRA. Interacts with NR0B2 and HNF1A. Expressed in skeletal muscle, brain and lung.

The protein localises to the nucleus. Transcriptional repressor involved in the regulation of the circadian rhythm by negatively regulating the activity of the clock genes and clock-controlled genes. Acts as the negative limb of a novel autoregulatory feedback loop (DEC loop) which differs from the one formed by the PER and CRY transcriptional repressors (PER/CRY loop). Both these loops are interlocked as it represses the expression of PER1 and in turn is repressed by PER1/2 and CRY1/2. Represses the activity of the circadian transcriptional activator: CLOCK-BMAL1 heterodimer by competing for the binding to E-box elements (5'-CACGTG-3') found within the promoters of its target genes. Negatively regulates its own expression and the expression of DBP and BHLHE41/DEC2. Acts as a corepressor of RXR and the RXR-LXR heterodimers and represses the ligand-induced RXRA/B/G, NR1H3/LXRA, NR1H4 and VDR transactivation activity. Inhibits HNF1A-mediated transactivation of CYP1A2, CYP2E1 and CYP3A11. The protein is Class E basic helix-loop-helix protein 41 (Bhlhe41) of Mus musculus (Mouse).